Reading from the N-terminus, the 342-residue chain is S-adenosylmethionine:tRNA ribosyltransferase-isomerase (342 aa).

It belongs to the QueA family. As to quaternary structure, monomer.

Its subcellular location is the cytoplasm. It carries out the reaction 7-aminomethyl-7-carbaguanosine(34) in tRNA + S-adenosyl-L-methionine = epoxyqueuosine(34) in tRNA + adenine + L-methionine + 2 H(+). The protein operates within tRNA modification; tRNA-queuosine biosynthesis. Transfers and isomerizes the ribose moiety from AdoMet to the 7-aminomethyl group of 7-deazaguanine (preQ1-tRNA) to give epoxyqueuosine (oQ-tRNA). The chain is S-adenosylmethionine:tRNA ribosyltransferase-isomerase from Streptococcus pneumoniae (strain Hungary19A-6).